We begin with the raw amino-acid sequence, 342 residues long: Ribosomal RNA small subunit methyltransferase C (342 aa).

Belongs to the methyltransferase superfamily. RsmC family. Monomer.

The protein localises to the cytoplasm. The catalysed reaction is guanosine(1207) in 16S rRNA + S-adenosyl-L-methionine = N(2)-methylguanosine(1207) in 16S rRNA + S-adenosyl-L-homocysteine + H(+). Its function is as follows. Specifically methylates the guanine in position 1207 of 16S rRNA in the 30S particle. The protein is Ribosomal RNA small subunit methyltransferase C of Salmonella paratyphi A (strain ATCC 9150 / SARB42).